A 418-amino-acid polypeptide reads, in one-letter code: Actin-related protein 3 (418 aa).

Met1 is modified (N-acetylmethionine).

It belongs to the actin family. ARP3 subfamily. In terms of assembly, component of the Arp2/3 complex composed of arpB/Arp2, arpC/Arp3, arcA/p41-arc, arcB/p34-arc, arcC/p21-arc, arcD/p20-arc and arcE/p16-arc. Interacts with carmil (via the region between the LRR domain and COOH-terminal proline-rich domain); carmil is required for Arp2/3-dependent actin nucleation. Arp2/3 complex, MyoB, MyoC, and the alpha and beta subunits of capping protein all form a larger complex with carmil.

It localises to the cytoplasm. It is found in the cytoskeleton. The protein localises to the cytosol. Its subcellular location is the cell cortex. The protein resides in the cell projection. It localises to the pseudopodium. Functionally, functions as ATP-binding component of the Arp2/3 complex which is involved in regulation of actin polymerization and together with an activating nucleation-promoting factor (NPF) mediates the formation of branched actin networks. Seems to contact the pointed end of the daughter actin filament. The Arp2/3 complex is involved in organizing the actin system in cell motility and chemotaxis, in phagocytosis and macropinocytosis, at late steps of endosome processing, and in mitosis. In concert with a group of other proteins, the Arp2/3 complex plays a general role in the rapid activation and adaptation of the actin system to its multiple functions. This Dictyostelium discoideum (Social amoeba) protein is Actin-related protein 3 (arpC).